The chain runs to 129 residues: Glycine cleavage system H protein (129 aa).

The Lipoyl-binding domain occupies 24 to 106; that stretch reads TYTVGITEHA…YADGWIFKIK (83 aa). Position 65 is an N6-lipoyllysine (lysine 65).

The protein belongs to the GcvH family. In terms of assembly, the glycine cleavage system is composed of four proteins: P, T, L and H. It depends on (R)-lipoate as a cofactor.

In terms of biological role, the glycine cleavage system catalyzes the degradation of glycine. The H protein shuttles the methylamine group of glycine from the P protein to the T protein. This chain is Glycine cleavage system H protein, found in Salmonella arizonae (strain ATCC BAA-731 / CDC346-86 / RSK2980).